The sequence spans 502 residues: Probable cobyric acid synthase (502 aa).

Residues 250 to 448 enclose the GATase cobBQ-type domain; it reads KITIGTLRLP…FHGIFHNFEF (199 aa). The active-site Nucleophile is the C330. Residue H440 is part of the active site.

This sequence belongs to the CobB/CobQ family. CobQ subfamily.

The protein operates within cofactor biosynthesis; adenosylcobalamin biosynthesis. Functionally, catalyzes amidations at positions B, D, E, and G on adenosylcobyrinic A,C-diamide. NH(2) groups are provided by glutamine, and one molecule of ATP is hydrogenolyzed for each amidation. The chain is Probable cobyric acid synthase from Methanosphaera stadtmanae (strain ATCC 43021 / DSM 3091 / JCM 11832 / MCB-3).